The following is a 554-amino-acid chain: Probable pectinesterase/pectinesterase inhibitor 6 (554 aa).

The N-terminal stretch at 1–32 (MDHKILLTPPKSLYTKCIITIIYVVSISHLNA) is a signal peptide. The segment at 29–183 (HLNAHFITSC…TKSISNSLAV (155 aa)) is pectinesterase inhibitor 6. 2 N-linked (GlcNAc...) asparagine glycosylation sites follow: Asn-119 and Asn-172. The interval 250 to 540 (DLVVAKDGSG…FTVENFLDGN (291 aa)) is pectinesterase 6. The substrate site is built by Thr-327 and Gln-357. The active-site Proton donor; for pectinesterase activity is the Asp-380. A disulfide bridge links Cys-394 with Cys-414. Residue Asp-401 is the Nucleophile; for pectinesterase activity of the active site. Residues Arg-460 and Trp-462 each coordinate substrate.

It in the N-terminal section; belongs to the PMEI family. This sequence in the C-terminal section; belongs to the pectinesterase family. Expressed in rosette leaves, flower and siliques.

It is found in the secreted. Its subcellular location is the cell wall. It carries out the reaction [(1-&gt;4)-alpha-D-galacturonosyl methyl ester](n) + n H2O = [(1-&gt;4)-alpha-D-galacturonosyl](n) + n methanol + n H(+). Its pathway is glycan metabolism; pectin degradation; 2-dehydro-3-deoxy-D-gluconate from pectin: step 1/5. Acts in the modification of cell walls via demethylesterification of cell wall pectin. The polypeptide is Probable pectinesterase/pectinesterase inhibitor 6 (PME6) (Arabidopsis thaliana (Mouse-ear cress)).